A 258-amino-acid polypeptide reads, in one-letter code: Protein CHAPERONE-LIKE PROTEIN OF POR1, chloroplastic (258 aa).

The N-terminal 48 residues, 1–48 (MSSSLLLSGSTVSSSFIAPSKPSLVRNSSKTSLLPFRNVSRSFKTVKC), are a transit peptide targeting the chloroplast. Threonine 49 carries the post-translational modification N-acetylthreonine. The segment at 67 to 122 (WDPYKRLGVSPYASEEEIWASRNFLLQQYAGHERSEESIEGAFEKLLMSSFIRRKK) is J-like domain required for holdase chaperone activity. 3 consecutive transmembrane segments (helical) span residues 162 to 182 (FLFA…GPAF), 207 to 227 (LIGI…IPMI), and 237 to 257 (TLEL…CTFL).

This sequence belongs to the chaperone-like protein of POR1 protein family. In terms of assembly, interacts with PORB in chloroplast. Interacts with PORA during plastid import. As to expression, expressed ubiquitously with higher levels in young leaves, flowers, and the root elongation zone.

It localises to the mitochondrion membrane. It is found in the plastid. The protein resides in the chloroplast envelope. Its subcellular location is the chloroplast thylakoid membrane. Functionally, essential protein required during embryogenesis. Exhibits holdase chaperone activity involved in the stabilization of NADPH:protochlorophyllide oxidoreductase (POR) proteins against photooxidative stress during POR proteins import into chloroplasts. Required for chloroplast biogenesis and development. When expressed in yeast, triggers mitochondria-mediated cell death associated with the loss of mitochondrial membrane potential. The chain is Protein CHAPERONE-LIKE PROTEIN OF POR1, chloroplastic from Arabidopsis thaliana (Mouse-ear cress).